Consider the following 338-residue polypeptide: Inositol 2-dehydrogenase 3 (338 aa).

This sequence belongs to the Gfo/Idh/MocA family. As to quaternary structure, homotetramer.

It catalyses the reaction myo-inositol + NAD(+) = scyllo-inosose + NADH + H(+). Functionally, involved in the oxidation of myo-inositol (MI) to 2-keto-myo-inositol (2KMI or 2-inosose). The chain is Inositol 2-dehydrogenase 3 from Saccharopolyspora erythraea (strain ATCC 11635 / DSM 40517 / JCM 4748 / NBRC 13426 / NCIMB 8594 / NRRL 2338).